The primary structure comprises 467 residues: MAKRVAEKELTDRNWDEEDEVEEMGTFSVASEEVMKNRAVKKAKRRNIGFESDSGGAFKGFKGLVVPSGGGGFSGFGGGSGGKPLEGLTNGNSTDSATPFSSAKTAAEPKAAFGSFAVNGPTTLVDKKISSPKCNSSNQPPSSGPASSTSCTGNTYHKQLAGLNCSVRDWIVKHVNTNPLCDLTPIFKDYERYLATIEKQLENGGSSSSERQTDRATAAMEPPSLFGSTKLQQDSPFSFHGNKAEDTSEKLEFTAEKKSDAAQGATSASFNFGKKIESSVLGSLSSGSLTGFSFSPGNSSLFGKDAAQSKAASSPFSAKASESQAGGSSSECRDGEEEESDEPPKVVVTEVKEEDAFYSKKCKLFYKKDNEFKEKGVGTLHLKPTATQKTQLLVRADTNLGNILLNVLIPPNMPCTRTGKNNVLIVCVPNPPLDEKQPTLPVTMLIRVKTSEDADELHKILLQKKDV.

Residues 1-14 show a composition bias toward basic and acidic residues; the sequence is MAKRVAEKELTDRN. The segment at 1 to 20 is disordered; sequence MAKRVAEKELTDRNWDEEDE. K8 is subject to N6-acetyllysine. S52 carries the phosphoserine modification. The stretch at 76 to 77 is repeat 1; that stretch reads FG. The interval 76–303 is 5 X 2 AA repeats of F-G; the sequence is FGGGSGGKPL…FSPGNSSLFG (228 aa). Residue K83 is modified to N6-acetyllysine. Residues 84–103 form a disordered region; that stretch reads PLEGLTNGNSTDSATPFSSA. The span at 89-103 shows a compositional bias: polar residues; the sequence is TNGNSTDSATPFSSA. Repeat unit 2 spans residues 113–114; sequence FG. An N6-acetyllysine modification is found at K127. Disordered stretches follow at residues 129-151 and 201-248; these read ISSP…STSC and LENG…EDTS. Polar residues predominate over residues 132–151; that stretch reads PKCNSSNQPPSSGPASSTSC. The tract at residues 144–206 is binding to CDKN1B; that stretch reads GPASSTSCTG…IEKQLENGGS (63 aa). S209 is modified (phosphoserine). Repeat 3 spans residues 226-227; sequence FG. Residues 226–236 are compositionally biased toward polar residues; the sequence is FGSTKLQQDSP. The residue at position 235 (S235) is a Phosphoserine. T247 is subject to Phosphothreonine. At S269 the chain carries Phosphoserine. Repeat 4 spans residues 272 to 273; it reads FG. S295 carries the phosphoserine modification. Residues 302-303 form repeat 5; that stretch reads FG. Residues 313 to 330 are compositionally biased toward low complexity; sequence SSPFSAKASESQAGGSSS. Residues 313–348 are disordered; that stretch reads SSPFSAKASESQAGGSSSECRDGEEEESDEPPKVVV. The RanBD1 domain occupies 334–467; the sequence is DGEEEESDEP…HKILLQKKDV (134 aa). Residue K352 forms a Glycyl lysine isopeptide (Lys-Gly) (interchain with G-Cter in SUMO2) linkage. K449 bears the N6-acetyllysine mark.

In terms of assembly, does not interact with TPR. Interacts with Importin alpha-2, Importin beta, Importin beta-2, NUP153, Ran binding protein 7, CDKN1B and itself. Highly expressed in testis, intermediate levels in kidney, liver, spleen and low basal levels in somatic cells. Expression in testis undergoes changes and subcellular localization during germ cell differentiation.

It localises to the nucleus. The protein localises to the nuclear pore complex. Its subcellular location is the nucleus membrane. Its function is as follows. Component of the nuclear pore complex that has a direct role in nuclear protein import. Actively displaces NLSs from importin-alpha, and facilitates disassembly of the importin-alpha:beta-cargo complex and importin recycling. Interacts with regulatory proteins of cell cycle progression including CDKN1B. This interaction is required for correct intracellular transport and degradation of CDKN1B. This chain is Nuclear pore complex protein Nup50 (Nup50), found in Rattus norvegicus (Rat).